The primary structure comprises 533 residues: Portal protein B (533 aa).

It belongs to the siphoviridae portal protein family. In terms of assembly, homododecamer. Interacts with the terminase complex composed of two small and one large terminase subunits. Proteolytically cleaved by the viral protease during capsid maturation.

The protein resides in the virion. In terms of biological role, forms the portal vertex of the capsid. This portal plays critical roles in head assembly, genome packaging, neck/tail attachment, and genome ejection. The portal protein multimerizes as a single ring-shaped homododecamer arranged around a central channel. Binds to the terminase subunits to form the packaging machine. This is Portal protein B from Escherichia phage lambda (Bacteriophage lambda).